We begin with the raw amino-acid sequence, 439 residues long: MAKPIVAIVGRPNVGKSTLFNKLAGKRISIVQDTPGVTRDRIYAEAEWLNYKFTMIDTGGIEPKSEDIIVSQMRRQAQIAIEMANVIIFLVDGKEGLAPADKEVAQMLRKSKKPVVLVVNKIDKLKDENNAYEFYNLGIGDPVTISSSQALGLGDMLDRVVEYFKDDESAGEDDERINIAFIGKPNVGKSSLINKLLGEERLIVSDIPGTTRDSIDSYVDTDFGEFTLIDTAGLRRKSKVKEEIERYSVIRTYASIERADVCILMIDATEGISEQDQKIIGYAHDINKAILVIVNKWDLVEKDDKTMDKFKKELKVNLSFMPYAKYLFISAKTGQRVVKVLQTAKECYDNYNKRVKTGVLNDVISQAIMMKEPPIVGTKRLKIYYVTQIGTKPPTFIFFVNDPACIHFSYQRYLENQLRENFDFQGTGIKSEFRERKEK.

2 consecutive EngA-type G domains span residues 4–168 (PIVA…KDDE) and 177–352 (INIA…DNYN). Residues 10-17 (GRPNVGKS), 57-61 (DTGGI), 120-123 (NKID), 183-190 (GKPNVGKS), 230-234 (DTAGL), and 295-298 (NKWD) each bind GTP. The region spanning 353–437 (KRVKTGVLND…GIKSEFRERK (85 aa)) is the KH-like domain.

This sequence belongs to the TRAFAC class TrmE-Era-EngA-EngB-Septin-like GTPase superfamily. EngA (Der) GTPase family. In terms of assembly, associates with the 50S ribosomal subunit.

In terms of biological role, GTPase that plays an essential role in the late steps of ribosome biogenesis. The chain is GTPase Der from Clostridium botulinum (strain ATCC 19397 / Type A).